The chain runs to 167 residues: Ribonuclease H (167 aa).

Positions 1–143 (MYKQIEIFTD…CDQLARKAAK (143 aa)) constitute an RNase H type-1 domain. 4 residues coordinate Mg(2+): aspartate 10, glutamate 48, aspartate 70, and aspartate 135.

The protein belongs to the RNase H family. Monomer. Mg(2+) serves as cofactor.

The protein localises to the cytoplasm. The enzyme catalyses Endonucleolytic cleavage to 5'-phosphomonoester.. Functionally, endonuclease that specifically degrades the RNA of RNA-DNA hybrids. This Blochmanniella floridana protein is Ribonuclease H.